The following is a 229-amino-acid chain: Non-structural protein V (229 aa).

2 stretches are compositionally biased toward polar residues: residues 30-46 (ATSQ…SSRT) and 82-112 (GRQN…LPSP). The tract at residues 30–112 (ATSQSSLNKP…MGSDTQLPSP (83 aa)) is disordered. Zn(2+)-binding residues include histidine 178, cysteine 197, cysteine 201, cysteine 213, cysteine 215, cysteine 218, cysteine 222, and cysteine 225.

The protein belongs to the paramyxoviruses V protein family.

In terms of biological role, blocks host interferon signaling. The protein is Non-structural protein V (P/V) of Homo sapiens (Human).